Reading from the N-terminus, the 35-residue chain is Potassium channel toxin alpha-KTx 23.2 (35 aa).

Cystine bridges form between C6-C26, C12-C31, and C16-C33.

It belongs to the short scorpion toxin superfamily. Potassium channel inhibitor family. Alpha-KTx 23 subfamily. Expressed by the venom gland.

It localises to the secreted. In terms of biological role, selectively and irreversibly binds (K(d)=2.9 pM) and blocks Kv1.3/KCNA3 potassium channels of human T-lymphocytes. Weakly blocks Kv1.2/KCNA2 (9%). The chain is Potassium channel toxin alpha-KTx 23.2 from Vaejovis mexicanus smithi (Mexican scorpion).